The primary structure comprises 1893 residues: CDK5 regulatory subunit-associated protein 2 (1893 aa).

Residues 51–94 (TVSPTRARNMKDFENQITELKKENFNLKLRIYFLEERMQQEFHG) are CM1 motif; interacts with the gTuRC. The interaction with NCKAP5L stretch occupies residues 58-196 (RNMKDFENQI…TEKALRLRLE (139 aa)). Phosphoserine is present on Ser547. The interaction with MAPRE1 stretch occupies residues 926–1208 (PGVTNREAKK…LENLKQQLEE (283 aa)). Thr1001 bears the Phosphothreonine mark. The segment at 1015 to 1071 (AAYQDSPGEQKGIKTTSSVWRDKEMDSDQQTSYEIDSEICPPDDLASLPSCKENPED) is disordered. The segment at 1196–1893 (SRVLENLKQQ…GTCSPSRPGS (698 aa)) is interaction with PCNT and AKAP9. A Phosphoserine modification is found at Ser1238. 2 disordered regions span residues 1347–1381 (LPES…NETE) and 1467–1486 (IKGS…SLSR). The segment covering 1469–1486 (GSRDKQKENDKLRESLSR) has biased composition (basic and acidic residues). Ser1490 carries the post-translational modification Phosphoserine. A compositionally biased stretch (basic and acidic residues) spans 1500-1519 (SVKEENERLQKEGSEKERHN). A disordered region spans residues 1500 to 1521 (SVKEENERLQKEGSEKERHNQQ). 2 positions are modified to phosphoserine: Ser1663 and Ser1666. Disordered regions lie at residues 1675-1706 (AVTP…ATST) and 1752-1774 (DVQT…PHPA). Positions 1726–1768 (HVLGLIEDYEALLKQISQGQRLLAEMDVQTQEAPSSTSQELGT) are interaction with CDK5R1. A compositionally biased stretch (polar residues) spans 1753–1766 (VQTQEAPSSTSQEL). Residues 1861-1870 (VVTHKILRKA) are required for centrosomal attachment, Golgi localization and CALM1 interaction. The tract at residues 1874-1893 (LELRPGGSHPGTCSPSRPGS) is disordered. Positions 1884–1893 (GTCSPSRPGS) are enriched in polar residues. Ser1893 is modified (phosphoserine).

Homodimer. Interacts with CDK5R1 (p35 form). CDK5RAP1, CDK5RAP2 and CDK5RAP3 show competitive binding to CDK5R1. May form a complex with CDK5R1 and CDK5. Interacts with pericentrin/PCNT; the interaction is leading to centrosomal and Golgi localization of CDK5RAP2 and PCNT. Interacts with AKAP9; the interaction targets CDK5RAP2 and AKAP9 to Golgi apparatus. Interacts with MAPRE1; the interaction is direct and targets CDK5RAP2 and EB1/MAPRE1 to microtubule plus ends. Interacts with TUBG1; the interaction is leading to the centrosomal localization of CDK5RAP2 and TUBG1. Interacts with TUBGCP3. Interacts with CALM1. Interacts with CDC20. Interacts with CEP68; degradation of CEP68 in early mitosis leads to removal of CDK5RAP2 from the centrosome which promotes centriole disengagement and subsequent centriole separation. Interacts with NCKAP5L. Forms a pericentrosomal complex with AKAP9, MAPRE1 and PDE4DIP isoform 13/MMG8/SMYLE; within this complex, MAPRE1 binding to CDK5RAP2 may be mediated by PDE4DIP. Interacts with LGALS3BP; this interaction may connect the pericentrosomal complex to the gamma-tubulin ring complex (gTuRC) to promote microtubule assembly and acetylation. Interacts with CCDC66. Associates (via CM1 motif) with TUBGCP2 of the gTuRC; the interaction plays a role in gTuRC activation. Phosphorylated in vitro by CDK5.

It is found in the cytoplasm. Its subcellular location is the cytoskeleton. The protein resides in the microtubule organizing center. The protein localises to the centrosome. It localises to the golgi apparatus. Functionally, potential regulator of CDK5 activity via its interaction with CDK5R1. Negative regulator of centriole disengagement (licensing) which maintains centriole engagement and cohesion. Involved in regulation of mitotic spindle orientation. Plays a role in the spindle checkpoint activation by acting as a transcriptional regulator of both BUBR1 and MAD2 promoter. Together with EB1/MAPRE1, may promote microtubule polymerization, bundle formation, growth and dynamics at the plus ends. Regulates centrosomal maturation by recruitment of the gamma-tubulin ring complex (gTuRC) onto centrosomes. In complex with PDE4DIP isoform 13/MMG8/SMYLE, MAPRE1 and AKAP9, contributes to microtubules nucleation and extension from the centrosome to the cell periphery. Required for the recruitment of AKAP9 to centrosomes. Plays a role in neurogenesis. This Pan troglodytes (Chimpanzee) protein is CDK5 regulatory subunit-associated protein 2 (CDK5RAP2).